Consider the following 151-residue polypeptide: Ribosome maturation factor RimP (151 aa).

It belongs to the RimP family.

The protein resides in the cytoplasm. In terms of biological role, required for maturation of 30S ribosomal subunits. The protein is Ribosome maturation factor RimP of Persephonella marina (strain DSM 14350 / EX-H1).